Reading from the N-terminus, the 134-residue chain is Complexin-1 (134 aa).

Residues methionine 1 to glutamate 112 form a disordered region. The span at aspartate 15 to glutamate 81 shows a compositional bias: basic and acidic residues. Residues aspartate 29–lysine 69 are a coiled coil. The segment at arginine 48 to tyrosine 70 is interaction with the SNARE complex.

Belongs to the complexin/synaphin family. In terms of assembly, binds to the SNARE core complex containing SNAP25, VAMP2 and STX1A.

It is found in the cytoplasm. It localises to the cytosol. The protein localises to the perikaryon. The protein resides in the presynapse. Its function is as follows. Positively regulates a late step in synaptic vesicle exocytosis. Organizes the SNAREs into a cross-linked zigzag topology that, when interposed between the vesicle and plasma membranes, is incompatible with fusion, thereby preventing SNAREs from releasing neurotransmitters until an action potential arrives at the synapse. Also involved in glucose-induced secretion of insulin by pancreatic beta-cells. This Bos taurus (Bovine) protein is Complexin-1 (CPLX1).